Consider the following 482-residue polypeptide: Interferon-induced protein with tetratricopeptide repeats 5 (482 aa).

TPR repeat units lie at residues 51–84, 94–127, 138–173, 181–214, 249–282, 338–371, 376–410, and 435–468; these read LALY…IQQE, LVTW…CKKL, PETD…EPDN, AITV…NPDN, PYVL…TPTS, AFAY…ENIT, HQIH…KDRS, and VQSL…DPEN. The interaction with the 5'-triphosphate group of PPP-RNA stretch occupies residues 254 to 260; sequence YAAKFYR.

Belongs to the IFIT family. As to quaternary structure, monomer. Interacts with MAP3K7 and the components of the IKK core complex CHUK, IKBKB and IKBKG; the interaction synergizes the recruitment of IKK to MAP3K7 and enhances IKK phosphorylation.

It localises to the cell projection. The protein resides in the ruffle membrane. Interferon-induced RNA-binding protein involved in the human innate immune response. Has a broad and adaptable RNA structure recognition important for RNA recognition specificity in antiviral defense. Binds precursor and processed tRNAs as well as poly-U-tailed tRNA fragments. Specifically binds single-stranded RNA bearing a 5'-triphosphate group (PPP-RNA), thereby acting as a sensor of viral single-stranded RNAs. Single-stranded PPP-RNAs, which lack 2'-O-methylation of the 5' cap and bear a 5'-triphosphate group instead, are specific from viruses, providing a molecular signature to distinguish between self and non-self mRNAs by the host during viral infection. Directly binds PPP-RNA in a non-sequence-specific manner. Also recognizes and selectively binds AT-rich dsDNA. Additionally, as a mediator in innate immunity, positively regulates IKK-NFKB signaling by sinergizing the recruitment of IKK to MAP3K7. In Homo sapiens (Human), this protein is Interferon-induced protein with tetratricopeptide repeats 5 (IFIT5).